The primary structure comprises 644 residues: Protein cueball (644 aa).

Residues 1–26 (MIRIRFGMDVLLVLLLATCLLTPAHG) form the signal peptide. Over 27–531 (TPLEWDFAVT…VCLTPRVWTS (505 aa)) the chain is Extracellular. N-linked (GlcNAc...) asparagine glycans are attached at residues asparagine 82 and asparagine 108. LDL-receptor class B repeat units follow at residues 121 to 166 (MNLF…DVCR), 167 to 211 (RKLY…DQLS), and 212 to 257 (DRLF…TNDA). Asparagine 175 and asparagine 190 each carry an N-linked (GlcNAc...) asparagine glycan. The segment at 280–301 (TTTSKPEEEDSTDSTDFTDPEP) is disordered. Positions 286–301 (EEEDSTDSTDFTDPEP) are enriched in acidic residues. Asparagine 313 carries an N-linked (GlcNAc...) asparagine glycan. 2 consecutive EGF-like domains span residues 398-430 (EIRE…FTGE) and 433-471 (ELSV…ARCE). 5 disulfides stabilise this stretch: cysteine 402/cysteine 411, cysteine 406/cysteine 421, cysteine 437/cysteine 447, cysteine 441/cysteine 459, and cysteine 461/cysteine 470. Residues asparagine 473 and asparagine 508 are each glycosylated (N-linked (GlcNAc...) asparagine). A helical membrane pass occupies residues 532-552 (SVIIILVVGIVSSLLLVAVIV). Residues 553-644 (HGIRRLYKPK…LIHNMEDDLY (92 aa)) lie on the Cytoplasmic side of the membrane.

The protein belongs to the cueball family.

Its subcellular location is the cell membrane. Has a role in spermatogenesis and oogenesis. This chain is Protein cueball, found in Drosophila sechellia (Fruit fly).